Here is a 55-residue protein sequence, read N- to C-terminus: Large ribosomal subunit protein bL33 (55 aa).

The protein belongs to the bacterial ribosomal protein bL33 family.

In Zymomonas mobilis subsp. mobilis (strain ATCC 31821 / ZM4 / CP4), this protein is Large ribosomal subunit protein bL33.